Here is a 268-residue protein sequence, read N- to C-terminus: Forkhead box protein R1 (268 aa).

The disordered stretch occupies residues 91 to 126; that stretch reads EDSCSEASEVQQPLPPCRQKRKQRRSTVPLPLAPGR. A DNA-binding region (fork-head) is located at residues 149 to 248; sequence RPPLHYFHLI…KEARTLASTQ (100 aa).

As to expression, expressed in adult germ cells (at protein level). Expressed in heart, liver, lung and embryonic brain.

The protein resides in the nucleus. It is found in the cytoplasm. Its subcellular location is the perinuclear region. In terms of biological role, transcription factor which acts as both an activator and a repressor. Activates transcription of a number of genes including the heat shock chaperones HSPA1A and HSPA6 and the antioxidant NADPH-dependent reductase DHRS2 which are involved in protection against oxidative stress. Required for normal brain development. The protein is Forkhead box protein R1 (Foxr1) of Mus musculus (Mouse).